The chain runs to 994 residues: Valine--tRNA ligase (994 aa).

The 'HIGH' region motif lies at 43–53 (PNVTGTLHMGH). A disordered region spans residues 332–356 (IASGATSDTTDTPSDSDASNASNQH). Positions 333-353 (ASGATSDTTDTPSDSDASNAS) are enriched in low complexity. A 'KMSKS' region motif is present at residues 585-589 (KMSKS). Lys588 contacts ATP. Residues 691-713 (TAHSPAQHQAGQDGQDVPRTPQP) are disordered. Positions 928 to 994 (LIDVDAERAR…NGLRERRTTL (67 aa)) form a coiled coil.

This sequence belongs to the class-I aminoacyl-tRNA synthetase family. ValS type 1 subfamily. Monomer.

It localises to the cytoplasm. The enzyme catalyses tRNA(Val) + L-valine + ATP = L-valyl-tRNA(Val) + AMP + diphosphate. In terms of biological role, catalyzes the attachment of valine to tRNA(Val). As ValRS can inadvertently accommodate and process structurally similar amino acids such as threonine, to avoid such errors, it has a 'posttransfer' editing activity that hydrolyzes mischarged Thr-tRNA(Val) in a tRNA-dependent manner. This chain is Valine--tRNA ligase, found in Xylella fastidiosa (strain M23).